Consider the following 355-residue polypeptide: uncharacterized protein (355 aa).

In terms of domain architecture, J spans 9 to 75 (DYYDILNISV…KLREKYDKLG (67 aa)).

This sequence belongs to the DnaJ family.

It is found in the cytoplasm. This is an uncharacterized protein from Schizosaccharomyces pombe (strain 972 / ATCC 24843) (Fission yeast).